We begin with the raw amino-acid sequence, 213 residues long: Large ribosomal subunit protein uL3 (213 aa).

The protein belongs to the universal ribosomal protein uL3 family. Part of the 50S ribosomal subunit. Forms a cluster with proteins L14 and L19.

One of the primary rRNA binding proteins, it binds directly near the 3'-end of the 23S rRNA, where it nucleates assembly of the 50S subunit. The polypeptide is Large ribosomal subunit protein uL3 (Desulforudis audaxviator (strain MP104C)).